We begin with the raw amino-acid sequence, 375 residues long: Growth/differentiation factor 8 (375 aa).

An N-terminal signal peptide occupies residues 1–18 (MQKLQIFVYIYLFMLLVA). The propeptide occupies 19–266 (GPVDLNENSE…VTDTPKRSRR (248 aa)). N-linked (GlcNAc...) asparagine glycosylation is found at asparagine 48 and asparagine 71. 4 cysteine pairs are disulfide-bonded: cysteine 272–cysteine 282, cysteine 281–cysteine 340, cysteine 309–cysteine 372, and cysteine 313–cysteine 374.

This sequence belongs to the TGF-beta family. In terms of assembly, homodimer; disulfide-linked. Interacts with WFIKKN2, leading to inhibit its activity. Interacts with FSTL3. Synthesized as large precursor molecule that undergoes proteolytic cleavage to generate an N-terminal propeptide and a disulfide linked C-terminal dimer, which is the biologically active molecule. The circulating form consists of a latent complex of the C-terminal dimer and other proteins, including its propeptide, which maintain the C-terminal dimer in a latent, inactive state. Ligand activation requires additional cleavage of the prodomain by a tolloid-like metalloproteinase.

It is found in the secreted. Acts specifically as a negative regulator of skeletal muscle growth. This chain is Growth/differentiation factor 8 (MSTN), found in Capra ibex (Ibex).